We begin with the raw amino-acid sequence, 125 residues long: Large ribosomal subunit protein bL12 (125 aa).

It belongs to the bacterial ribosomal protein bL12 family. In terms of assembly, homodimer. Part of the ribosomal stalk of the 50S ribosomal subunit. Forms a multimeric L10(L12)X complex, where L10 forms an elongated spine to which 2 to 4 L12 dimers bind in a sequential fashion. Binds GTP-bound translation factors.

Functionally, forms part of the ribosomal stalk which helps the ribosome interact with GTP-bound translation factors. Is thus essential for accurate translation. In Francisella tularensis subsp. tularensis (strain SCHU S4 / Schu 4), this protein is Large ribosomal subunit protein bL12.